The chain runs to 199 residues: Adenosylcobinamide-GDP ribazoletransferase (199 aa).

The next 2 helical transmembrane spans lie at 2 to 22 and 61 to 81; these read LAGGVPHGTVAFAYLAVVFAV and IAAVVVVVAGLVTGSLGVAAL.

The protein belongs to the CobS family. The cofactor is Mg(2+).

It is found in the cell membrane. It catalyses the reaction alpha-ribazole + adenosylcob(III)inamide-GDP = adenosylcob(III)alamin + GMP + H(+). The catalysed reaction is alpha-ribazole 5'-phosphate + adenosylcob(III)inamide-GDP = adenosylcob(III)alamin 5'-phosphate + GMP + H(+). It participates in cofactor biosynthesis; adenosylcobalamin biosynthesis; adenosylcobalamin from cob(II)yrinate a,c-diamide: step 7/7. In terms of biological role, joins adenosylcobinamide-GDP and alpha-ribazole to generate adenosylcobalamin (Ado-cobalamin). Also synthesizes adenosylcobalamin 5'-phosphate from adenosylcobinamide-GDP and alpha-ribazole 5'-phosphate. The protein is Adenosylcobinamide-GDP ribazoletransferase of Halobacterium salinarum (strain ATCC 700922 / JCM 11081 / NRC-1) (Halobacterium halobium).